A 108-amino-acid polypeptide reads, in one-letter code: ATP-dependent Clp protease adapter protein ClpS (108 aa).

The protein belongs to the ClpS family. Binds to the N-terminal domain of the chaperone ClpA.

Involved in the modulation of the specificity of the ClpAP-mediated ATP-dependent protein degradation. This chain is ATP-dependent Clp protease adapter protein ClpS, found in Ralstonia nicotianae (strain ATCC BAA-1114 / GMI1000) (Ralstonia solanacearum).